Here is a 481-residue protein sequence, read N- to C-terminus: Glutamate--tRNA ligase (481 aa).

The 'HIGH' region signature appears at 28 to 38; the sequence is PSPTGFLHLGG. Basic and acidic residues predominate over residues 139–148; the sequence is RYDGTWRPEP. Positions 139-159 are disordered; the sequence is RYDGTWRPEPGKTLPPVPADR. Residues 260-264 carry the 'KMSKS' region motif; the sequence is KLSKR. Lysine 263 contributes to the ATP binding site.

It belongs to the class-I aminoacyl-tRNA synthetase family. Glutamate--tRNA ligase type 1 subfamily. Monomer.

It localises to the cytoplasm. The enzyme catalyses tRNA(Glu) + L-glutamate + ATP = L-glutamyl-tRNA(Glu) + AMP + diphosphate. Catalyzes the attachment of glutamate to tRNA(Glu) in a two-step reaction: glutamate is first activated by ATP to form Glu-AMP and then transferred to the acceptor end of tRNA(Glu). The sequence is that of Glutamate--tRNA ligase from Bordetella parapertussis (strain 12822 / ATCC BAA-587 / NCTC 13253).